The following is a 342-amino-acid chain: Glucokinase (342 aa).

7–12 (GDIGGT) is a binding site for ATP.

This sequence belongs to the bacterial glucokinase family.

It localises to the cytoplasm. The enzyme catalyses D-glucose + ATP = D-glucose 6-phosphate + ADP + H(+). The polypeptide is Glucokinase (Nostoc sp. (strain PCC 7120 / SAG 25.82 / UTEX 2576)).